The following is a 572-amino-acid chain: 2-succinyl-5-enolpyruvyl-6-hydroxy-3-cyclohexene-1-carboxylate synthase (572 aa).

The protein belongs to the TPP enzyme family. MenD subfamily. Homodimer. Mg(2+) is required as a cofactor. The cofactor is Mn(2+). Requires thiamine diphosphate as cofactor.

The catalysed reaction is isochorismate + 2-oxoglutarate + H(+) = 5-enolpyruvoyl-6-hydroxy-2-succinyl-cyclohex-3-ene-1-carboxylate + CO2. The protein operates within quinol/quinone metabolism; 1,4-dihydroxy-2-naphthoate biosynthesis; 1,4-dihydroxy-2-naphthoate from chorismate: step 2/7. Its pathway is quinol/quinone metabolism; menaquinone biosynthesis. Its function is as follows. Catalyzes the thiamine diphosphate-dependent decarboxylation of 2-oxoglutarate and the subsequent addition of the resulting succinic semialdehyde-thiamine pyrophosphate anion to isochorismate to yield 2-succinyl-5-enolpyruvyl-6-hydroxy-3-cyclohexene-1-carboxylate (SEPHCHC). The protein is 2-succinyl-5-enolpyruvyl-6-hydroxy-3-cyclohexene-1-carboxylate synthase of Shewanella amazonensis (strain ATCC BAA-1098 / SB2B).